An 853-amino-acid chain; its full sequence is DNA mismatch repair protein MutS (853 aa).

An ATP-binding site is contributed by 614–621 (GPNMGGKS).

Belongs to the DNA mismatch repair MutS family.

In terms of biological role, this protein is involved in the repair of mismatches in DNA. It is possible that it carries out the mismatch recognition step. This protein has a weak ATPase activity. This chain is DNA mismatch repair protein MutS, found in Escherichia coli (strain 55989 / EAEC).